The primary structure comprises 273 residues: MSYFTIQNEDLPQGFTFRPHDKIYDSLWEMMDDGYFPSTIPLKTTINGVDMPSVGWLEVDEGLYDILIDGLDVLRPTDEEMIVSATGWPLEKNRALILNFFRNLRMDIIGTYTLQRSFITIMSIVLFGDQNPRLRRKKRSRVSLGKMLFDLALRMRSKIRRMKLTEVQVTGQNLVKDLCLLHILDLQKRLVTRGTIAEKRFFTAIEQAPCNYEPKRYGMKKKHMNFMFESDRKNLTVHPTLVNLEEHWITFESARERLLDTTFTKDWPVVGSL.

Belongs to the phlebovirus NS-S protein family. In terms of assembly, interacts with host MAVS; this interaction weakly inhibits the host IFN response.

The protein localises to the host cytoplasm. Functionally, acts as a weak IFN antagonist. This is Non-structural protein NS-S (NSS) from Homo sapiens (Human).